Consider the following 234-residue polypeptide: Orotidine 5'-phosphate decarboxylase (234 aa).

Substrate contacts are provided by residues Asp-17, Lys-38, 65-74 (DLKLHDIPNT), Thr-122, Arg-184, Gln-193, Gly-213, and Arg-214. The active-site Proton donor is Lys-67.

This sequence belongs to the OMP decarboxylase family. Type 1 subfamily. As to quaternary structure, homodimer.

The catalysed reaction is orotidine 5'-phosphate + H(+) = UMP + CO2. It participates in pyrimidine metabolism; UMP biosynthesis via de novo pathway; UMP from orotate: step 2/2. Catalyzes the decarboxylation of orotidine 5'-monophosphate (OMP) to uridine 5'-monophosphate (UMP). The sequence is that of Orotidine 5'-phosphate decarboxylase from Thermosynechococcus vestitus (strain NIES-2133 / IAM M-273 / BP-1).